Here is a 202-residue protein sequence, read N- to C-terminus: Adenosylcobalamin/alpha-ribazole phosphatase (202 aa).

The Tele-phosphohistidine intermediate role is filled by H8. E81 functions as the Proton donor/acceptor in the catalytic mechanism.

The protein belongs to the phosphoglycerate mutase family.

It catalyses the reaction adenosylcob(III)alamin 5'-phosphate + H2O = adenosylcob(III)alamin + phosphate. The catalysed reaction is alpha-ribazole 5'-phosphate + H2O = alpha-ribazole + phosphate. It participates in nucleoside biosynthesis; alpha-ribazole biosynthesis; alpha-ribazole from 5,6-dimethylbenzimidazole: step 2/2. Catalyzes the conversion of adenosylcobalamin 5'-phosphate to adenosylcobalamin (vitamin B12); involved in the assembly of the nucleotide loop of cobalamin. Also catalyzes the hydrolysis of the phospho group from alpha-ribazole 5'-phosphate to form alpha-ribazole. The protein is Adenosylcobalamin/alpha-ribazole phosphatase (cobC) of Salmonella typhi.